Here is a 263-residue protein sequence, read N- to C-terminus: Endonuclease 8 (263 aa).

P2 acts as the Schiff-base intermediate with DNA in catalysis. E3 functions as the Proton donor in the catalytic mechanism. The active-site Proton donor; for beta-elimination activity is K53. Q70, R125, and N169 together coordinate DNA. An FPG-type zinc finger spans residues 229-263 (KVFHRDGELCERCGGIIEKTTLSSRPFYWCPGCQH). R253 serves as the catalytic Proton donor; for delta-elimination activity.

This sequence belongs to the FPG family. Requires Zn(2+) as cofactor.

The enzyme catalyses 2'-deoxyribonucleotide-(2'-deoxyribose 5'-phosphate)-2'-deoxyribonucleotide-DNA = a 3'-end 2'-deoxyribonucleotide-(2,3-dehydro-2,3-deoxyribose 5'-phosphate)-DNA + a 5'-end 5'-phospho-2'-deoxyribonucleoside-DNA + H(+). Functionally, involved in base excision repair of DNA damaged by oxidation or by mutagenic agents. Acts as a DNA glycosylase that recognizes and removes damaged bases. Has a preference for oxidized pyrimidines, such as thymine glycol, 5,6-dihydrouracil and 5,6-dihydrothymine. Has AP (apurinic/apyrimidinic) lyase activity and introduces nicks in the DNA strand. Cleaves the DNA backbone by beta-delta elimination to generate a single-strand break at the site of the removed base with both 3'- and 5'-phosphates. This Escherichia coli (strain SE11) protein is Endonuclease 8.